We begin with the raw amino-acid sequence, 131 residues long: Photosystem II extrinsic protein U (131 aa).

Residues M1 to A28 form the signal peptide. The propeptide occupies L29–A36.

This sequence belongs to the PsbU family. PSII is composed of 1 copy each of membrane proteins PsbA, PsbB, PsbC, PsbD, PsbE, PsbF, PsbH, PsbI, PsbJ, PsbK, PsbL, PsbM, PsbT, PsbX, PsbY, PsbZ, Psb30/Ycf12, peripheral proteins PsbO, CyanoQ (PsbQ), PsbU, PsbV and a large number of cofactors. It forms dimeric complexes.

Its subcellular location is the cellular thylakoid membrane. One of the extrinsic, lumenal subunits of photosystem II (PSII). PSII is a light-driven water plastoquinone oxidoreductase, using light energy to abstract electrons from H(2)O, generating a proton gradient subsequently used for ATP formation. The extrinsic proteins stabilize the structure of photosystem II oxygen-evolving complex (OEC), the ion environment of oxygen evolution and protect the OEC against heat-induced inactivation. May modulate the Cl(-) requirement for oxygen evolution. This Synechocystis sp. (strain ATCC 27184 / PCC 6803 / Kazusa) protein is Photosystem II extrinsic protein U.